Here is a 132-residue protein sequence, read N- to C-terminus: Ubiquinol-cytochrome c reductase complex assembly factor 4 (132 aa).

Positions 1–15 (MNRVLCAPAAGAVRA) are cleaved as a signal peptide. The Mitochondrial matrix portion of the chain corresponds to 16-78 (LRLIGRTSRS…GKGHQRPWWK (63 aa)). The interval 24–73 (RSLHPLPGSRDRAHPAAEEQDDPDRPTEFSSSKANPRRWSVGHSMGKGHQ) is disordered. Positions 32–50 (SRDRAHPAAEEQDDPDRPT) are enriched in basic and acidic residues. A helical transmembrane segment spans residues 79–95 (VLPLSCFLVALIIWCYL). At 96 to 132 (REESEADQWLRQVWGEVPEPSDRSEEPETPAAYRART) the chain is on the mitochondrial intermembrane side. Positions 110–132 (GEVPEPSDRSEEPETPAAYRART) are disordered.

Belongs to the UQCC4 family. As to quaternary structure, forms a complex, named COMB/coordinator of mitochondrial CYTB biogenesis, composed of UQCC1, UQCC2, UQCC4, UQCC5 and UQCC6; stabilizes nascent cytochrome b/MT-CYB and promotes its membrane insertion. Forms a complex, named COMA, composed of UQCC1, UQCC2 and UQCC4; activates MT-CYB translation. Forms a complex, named COMC, composed of UQCC1, UQCC2; UQCC3 and UQCC4; mediates MT-CYB hemylation and association with the first nuclear-encoded complex III subunit UQCRQ. Complexes COMA and COMB are bound to the mitochondrion inner membrane by UQCC4.

The protein resides in the mitochondrion inner membrane. Its function is as follows. Required for the assembly and stability of the mitochondrial ubiquinol-cytochrome c reductase complex (complex III (CIII) or cytochrome b-c1 complex), a multisubunit transmembrane complex that is part of the mitochondrial electron transport chain (ETC) which drives oxidative phosphorylation. In Pongo abelii (Sumatran orangutan), this protein is Ubiquinol-cytochrome c reductase complex assembly factor 4 (UQCC4).